Reading from the N-terminus, the 117-residue chain is uncharacterized protein (117 aa).

It belongs to the mimivirus R69 family.

This is an uncharacterized protein from Acanthamoeba polyphaga mimivirus (APMV).